Reading from the N-terminus, the 452-residue chain is Deoxybrevianamide E synthase notF (452 aa).

The segment covering 1–19 (MTAPELRVDTFRAPEDAPK) has biased composition (basic and acidic residues). The segment at 1–38 (MTAPELRVDTFRAPEDAPKEPSAQQPRLPSSPSPAQAL) is disordered. The span at 21–38 (PSAQQPRLPSSPSPAQAL) shows a compositional bias: low complexity. E108 lines the brevianamide F pocket. The dimethylallyl diphosphate site is built by R122, K212, Y214, K282, Y284, Y371, Y436, and Y440.

Belongs to the tryptophan dimethylallyltransferase family. Monomer.

It carries out the reaction brevianamide F + dimethylallyl diphosphate = deoxybrevianamide E + diphosphate. It participates in alkaloid biosynthesis. Its activity is regulated as follows. Addition of 5 mM Mg(2+), Ca(2+) or Mn(2+) slightly enhances catalysis (about 100-120%). Significant reduction of enzyme activity (2%-35%) is observed with Cu(2+), Zn(2+), Fe(2+), or Sn(2+) (5 mM). In terms of biological role, deoxybrevianamide E synthase; part of the gene cluster that mediates the biosynthesis of notoamide, a fungal indole alkaloid that belongs to a family of natural products containing a characteristic bicyclo[2.2.2]diazaoctane core. The first step of notoamide biosynthesis involves coupling of L-proline and L-tryptophan by the bimodular NRPS notE, to produce cyclo-L-tryptophan-L-proline called brevianamide F. The reverse prenyltransferase notF then acts as a deoxybrevianamide E synthase and converts brevianamide F to deoxybrevianamide E via reverse prenylation at C-2 of the indole ring leading to the bicyclo[2.2.2]diazaoctane core. Deoxybrevianamide E is further hydroxylated at C-6 of the indole ring, likely catalyzed by the cytochrome P450 monooxygenase notG, to yield 6-hydroxy-deoxybrevianamide E. 6-hydroxy-deoxybrevianamide E is a specific substrate of the prenyltransferase notC for normal prenylation at C-7 to produce 6-hydroxy-7-prenyl-deoxybrevianamide, also called notoamide S. As the proposed pivotal branching point in notoamide biosynthesis, notoamide S can be diverted to notoamide E through an oxidative pyran ring closure putatively catalyzed by either notH cytochrome P450 monooxygenase or the notD FAD-linked oxidoreductase. This step would be followed by an indole 2,3-epoxidation-initiated pinacol-like rearrangement catalyzed by the notB FAD-dependent monooxygenase leading to the formation of notoamide C and notoamide D. On the other hand notoamide S is converted to notoamide T by notH (or notD), a bifunctional oxidase that also functions as the intramolecular Diels-Alderase responsible for generation of (+)-notoamide T. To generate antipodal (-)-notoaminide T, notH' (or notD') in Aspergillus versicolor is expected to catalyze a Diels-Alder reaction leading to the opposite stereochemistry. The remaining oxidoreductase notD (or notH) likely catalyzes the oxidative pyran ring formation to yield (+)-stephacidin A. The FAD-dependent monooxygenase notI is highly similar to notB and is predicted to catalyze a similar conversion from (+)-stephacidin A to (-)-notoamide B via the 2,3-epoxidation of (+)-stephacidin A followed by a pinacol-type rearrangement. Finally, it remains unclear which enzyme could be responsible for the final hydroxylation steps leading to notoamide A and sclerotiamide. This is Deoxybrevianamide E synthase notF from Aspergillus sp. (strain MF297-2).